A 460-amino-acid chain; its full sequence is Glutamyl-tRNA reductase (460 aa).

Residues 48–51 (TCNR), Ser100, 105–107 (EDQ), and Gln111 contribute to the substrate site. Residue Cys49 is the Nucleophile of the active site. 180 to 185 (GAGEIG) lines the NADP(+) pocket.

It belongs to the glutamyl-tRNA reductase family. Homodimer.

It carries out the reaction (S)-4-amino-5-oxopentanoate + tRNA(Glu) + NADP(+) = L-glutamyl-tRNA(Glu) + NADPH + H(+). It participates in porphyrin-containing compound metabolism; protoporphyrin-IX biosynthesis; 5-aminolevulinate from L-glutamyl-tRNA(Glu): step 1/2. Functionally, catalyzes the NADPH-dependent reduction of glutamyl-tRNA(Glu) to glutamate 1-semialdehyde (GSA). The protein is Glutamyl-tRNA reductase of Methanosarcina acetivorans (strain ATCC 35395 / DSM 2834 / JCM 12185 / C2A).